Here is a 358-residue protein sequence, read N- to C-terminus: UDP-N-acetylglucosamine--N-acetylmuramyl-(pentapeptide) pyrophosphoryl-undecaprenol N-acetylglucosamine transferase (358 aa).

UDP-N-acetyl-alpha-D-glucosamine contacts are provided by residues 13-15 (TGG), N125, R162, S190, I244, 263-268 (ALTVAE), and Q289.

This sequence belongs to the glycosyltransferase 28 family. MurG subfamily.

The protein localises to the cell inner membrane. It catalyses the reaction di-trans,octa-cis-undecaprenyl diphospho-N-acetyl-alpha-D-muramoyl-L-alanyl-D-glutamyl-meso-2,6-diaminopimeloyl-D-alanyl-D-alanine + UDP-N-acetyl-alpha-D-glucosamine = di-trans,octa-cis-undecaprenyl diphospho-[N-acetyl-alpha-D-glucosaminyl-(1-&gt;4)]-N-acetyl-alpha-D-muramoyl-L-alanyl-D-glutamyl-meso-2,6-diaminopimeloyl-D-alanyl-D-alanine + UDP + H(+). The protein operates within cell wall biogenesis; peptidoglycan biosynthesis. Cell wall formation. Catalyzes the transfer of a GlcNAc subunit on undecaprenyl-pyrophosphoryl-MurNAc-pentapeptide (lipid intermediate I) to form undecaprenyl-pyrophosphoryl-MurNAc-(pentapeptide)GlcNAc (lipid intermediate II). The sequence is that of UDP-N-acetylglucosamine--N-acetylmuramyl-(pentapeptide) pyrophosphoryl-undecaprenol N-acetylglucosamine transferase from Halorhodospira halophila (strain DSM 244 / SL1) (Ectothiorhodospira halophila (strain DSM 244 / SL1)).